We begin with the raw amino-acid sequence, 161 residues long: MKIRIGHGFDVHKFGAARPLILCGVEVPYETGLVAHSDGDVVLHAISDAILGALALGDIGKHFPDTDAAYKGADSRVLLRHCYALARAKGFVLGNLDVTIIAQVPKMAPHIEAMRQILAADLTSELDDINVKATTTEHLGFTGRKEGIAVEAVVLMTRKHD.

A divalent metal cation contacts are provided by D10 and H12. 4-CDP-2-C-methyl-D-erythritol 2-phosphate contacts are provided by residues 10 to 12 (DVH) and 36 to 37 (HS). H44 contacts a divalent metal cation. Residues 58–60 (DIG), 63–67 (FPDTD), 102–108 (AQVPKMA), 134–137 (TTTE), F141, and R144 each bind 4-CDP-2-C-methyl-D-erythritol 2-phosphate.

The protein belongs to the IspF family. In terms of assembly, homotrimer. Requires a divalent metal cation as cofactor.

The catalysed reaction is 4-CDP-2-C-methyl-D-erythritol 2-phosphate = 2-C-methyl-D-erythritol 2,4-cyclic diphosphate + CMP. Its pathway is isoprenoid biosynthesis; isopentenyl diphosphate biosynthesis via DXP pathway; isopentenyl diphosphate from 1-deoxy-D-xylulose 5-phosphate: step 4/6. In terms of biological role, involved in the biosynthesis of isopentenyl diphosphate (IPP) and dimethylallyl diphosphate (DMAPP), two major building blocks of isoprenoid compounds. Catalyzes the conversion of 4-diphosphocytidyl-2-C-methyl-D-erythritol 2-phosphate (CDP-ME2P) to 2-C-methyl-D-erythritol 2,4-cyclodiphosphate (ME-CPP) with a corresponding release of cytidine 5-monophosphate (CMP). In Shewanella baltica (strain OS223), this protein is 2-C-methyl-D-erythritol 2,4-cyclodiphosphate synthase.